Reading from the N-terminus, the 572-residue chain is Proline--tRNA ligase (572 aa).

Belongs to the class-II aminoacyl-tRNA synthetase family. ProS type 1 subfamily. In terms of assembly, homodimer. May form a tertiary complex with YbaK and t-RNA(Pro).

Its subcellular location is the cytoplasm. The enzyme catalyses tRNA(Pro) + L-proline + ATP = L-prolyl-tRNA(Pro) + AMP + diphosphate. Functionally, catalyzes the attachment of proline to tRNA(Pro) in a two-step reaction: proline is first activated by ATP to form Pro-AMP and then transferred to the acceptor end of tRNA(Pro). As ProRS can inadvertently accommodate and process non-cognate amino acids such as alanine and cysteine, to avoid such errors it has two additional distinct editing activities against alanine. One activity is designated as 'pretransfer' editing and involves the tRNA(Pro)-independent hydrolysis of activated Ala-AMP. The other activity is designated 'posttransfer' editing and involves deacylation of mischarged Ala-tRNA(Pro). The misacylated Cys-tRNA(Pro) is not edited by ProRS, but is probably edited in trans by YbaK. The sequence is that of Proline--tRNA ligase from Haemophilus influenzae (strain ATCC 51907 / DSM 11121 / KW20 / Rd).